A 611-amino-acid chain; its full sequence is Dihydroxy-acid dehydratase (611 aa).

Mg(2+) is bound at residue D81. C122 contributes to the [2Fe-2S] cluster binding site. Residues D123 and K124 each contribute to the Mg(2+) site. K124 bears the N6-carboxylysine mark. Position 195 (C195) interacts with [2Fe-2S] cluster. E491 provides a ligand contact to Mg(2+). Catalysis depends on S517, which acts as the Proton acceptor.

This sequence belongs to the IlvD/Edd family. Homodimer. [2Fe-2S] cluster serves as cofactor. It depends on Mg(2+) as a cofactor.

It catalyses the reaction (2R)-2,3-dihydroxy-3-methylbutanoate = 3-methyl-2-oxobutanoate + H2O. The enzyme catalyses (2R,3R)-2,3-dihydroxy-3-methylpentanoate = (S)-3-methyl-2-oxopentanoate + H2O. The protein operates within amino-acid biosynthesis; L-isoleucine biosynthesis; L-isoleucine from 2-oxobutanoate: step 3/4. It participates in amino-acid biosynthesis; L-valine biosynthesis; L-valine from pyruvate: step 3/4. In terms of biological role, functions in the biosynthesis of branched-chain amino acids. Catalyzes the dehydration of (2R,3R)-2,3-dihydroxy-3-methylpentanoate (2,3-dihydroxy-3-methylvalerate) into 2-oxo-3-methylpentanoate (2-oxo-3-methylvalerate) and of (2R)-2,3-dihydroxy-3-methylbutanoate (2,3-dihydroxyisovalerate) into 2-oxo-3-methylbutanoate (2-oxoisovalerate), the penultimate precursor to L-isoleucine and L-valine, respectively. The chain is Dihydroxy-acid dehydratase from Histophilus somni (strain 2336) (Haemophilus somnus).